The following is a 200-amino-acid chain: Elongation factor Ts (200 aa).

Residues 82–85 form an involved in Mg(2+) ion dislocation from EF-Tu region; that stretch reads TDFV.

It belongs to the EF-Ts family.

The protein resides in the cytoplasm. In terms of biological role, associates with the EF-Tu.GDP complex and induces the exchange of GDP to GTP. It remains bound to the aminoacyl-tRNA.EF-Tu.GTP complex up to the GTP hydrolysis stage on the ribosome. This is Elongation factor Ts from Solidesulfovibrio magneticus (strain ATCC 700980 / DSM 13731 / RS-1) (Desulfovibrio magneticus).